The primary structure comprises 532 residues: MAYLGVDTSRIAGTQPLEMLLISSSSPDPHSTIIIDPRTGVSSWSYKGGELQGASTGLVEPLGKDGEHIVVTTKDRPLVHVIAVHSKDRFHQKCVLPGPVSAICSDRSGRFAFMSIKRQLYCWLLSTGELLSVIDAHYQNITKLALSDDDSMVFTASKDGAIHGYLVTELVSADRDSTVAPFRKWASHTLAVSDLKITHGSNPRILTTGADHIACLHSISMDSVILKASADRPLTSCAIDSAETRIFIGTEVGNIAQINLFQLGAEERDLLIQAGDEHNTKFRVLNGHSDEITRLTINTDGTLLASGDASGKYCIWEISSHQCLKVSTMRSTISTLRFIPFWPTISGGEHTKKFRPVWDLRREPTKCERLAIEVSNEFNADQKHWNDVIEDSIDQMLLESGSTTSAQLQWQVEAPMRKQAEVEKAEAEAMAQVITLGDDEDDAPEVGNQRRQNKKNNKKNRKLQKKLEAEQALKNKVIEEEAELIVIDDGEESNKKILDLQASMTELREENEKLKEINRQMYEFVAAEIVDR.

WD repeat units follow at residues 136-175 and 287-326; these read AHYQ…SADR and GHSD…CLKV. Positions 435-464 are disordered; that stretch reads TLGDDEDDAPEVGNQRRQNKKNNKKNRKLQ. Residues 445-526 are a coiled coil; that stretch reads EVGNQRRQNK…INRQMYEFVA (82 aa). The span at 451 to 464 shows a compositional bias: basic residues; it reads RQNKKNNKKNRKLQ.

The protein belongs to the WD repeat IPI3/WDR18 family. As to quaternary structure, component of the PELP1 complex, composed of at least PELP1, TEX10 and WDR18. The complex interacts with pre-60S ribosome particles.

The protein localises to the nucleus. It localises to the nucleolus. Its subcellular location is the nucleoplasm. In terms of biological role, component of the PELP1 complex involved in the nucleolar steps of 28S rRNA maturation and the subsequent nucleoplasmic transit of the pre-60S ribosomal subunit. Required for processing ITS2 sequences from rRNA intermediates during 26S rRNA maturation. Required in the soma to promote normal proliferation and prevent germline tumor formation. The chain is Pre-rRNA-processing protein pro-1 (pro-1) from Caenorhabditis briggsae.